Reading from the N-terminus, the 148-residue chain is Glutamyl-tRNA(Gln) amidotransferase subunit C, mitochondrial (148 aa).

The protein belongs to the GatC family. In terms of assembly, subunit of the heterotrimeric GatCAB amidotransferase (AdT) complex, composed of A, B and C subunits.

The protein resides in the mitochondrion. The catalysed reaction is L-glutamyl-tRNA(Gln) + L-glutamine + ATP + H2O = L-glutaminyl-tRNA(Gln) + L-glutamate + ADP + phosphate + H(+). Its function is as follows. Allows the formation of correctly charged Gln-tRNA(Gln) through the transamidation of misacylated Glu-tRNA(Gln) in the mitochondria. The reaction takes place in the presence of glutamine and ATP through an activated gamma-phospho-Glu-tRNA(Gln). In Drosophila yakuba (Fruit fly), this protein is Glutamyl-tRNA(Gln) amidotransferase subunit C, mitochondrial.